The following is a 277-amino-acid chain: Phosphatidylglycerol--prolipoprotein diacylglyceryl transferase (277 aa).

4 helical membrane-spanning segments follow: residues 11 to 31 (IIFS…LISF), 55 to 75 (LLYI…IIFY), 93 to 113 (GGMS…YLSL), and 117 to 137 (VKIL…LGAG). Arginine 138 contributes to the a 1,2-diacyl-sn-glycero-3-phospho-(1'-sn-glycerol) binding site. The next 3 membrane-spanning stretches (helical) occupy residues 192–212 (PSQL…IYFF), 220–240 (GSIS…SEFF), and 256–276 (MGQI…NLFI).

This sequence belongs to the Lgt family.

Its subcellular location is the cell inner membrane. It carries out the reaction L-cysteinyl-[prolipoprotein] + a 1,2-diacyl-sn-glycero-3-phospho-(1'-sn-glycerol) = an S-1,2-diacyl-sn-glyceryl-L-cysteinyl-[prolipoprotein] + sn-glycerol 1-phosphate + H(+). Its pathway is protein modification; lipoprotein biosynthesis (diacylglyceryl transfer). In terms of biological role, catalyzes the transfer of the diacylglyceryl group from phosphatidylglycerol to the sulfhydryl group of the N-terminal cysteine of a prolipoprotein, the first step in the formation of mature lipoproteins. This chain is Phosphatidylglycerol--prolipoprotein diacylglyceryl transferase, found in Buchnera aphidicola subsp. Schizaphis graminum (strain Sg).